Reading from the N-terminus, the 74-residue chain is Kappa-scoloptoxin(07)-Ssm2c (74 aa).

The first 19 residues, 1–19, serve as a signal peptide directing secretion; that stretch reads MLVFYAPLFVSIFSNTVMG. A propeptide spanning residues 20 to 41 is cleaved from the precursor; that stretch reads ATIDKPIPKPILREAIEKIAVN.

It belongs to the scoloptoxin-07 family. Post-translationally, contains 3 disulfide bonds. In terms of tissue distribution, expressed by the venom gland.

It localises to the secreted. Its function is as follows. Inhibits voltage-gated potassium channels. This chain is Kappa-scoloptoxin(07)-Ssm2c, found in Scolopendra mutilans (Chinese red-headed centipede).